The sequence spans 971 residues: Nuclear factor NF-kappa-B p105 subunit (971 aa).

Residues 40–365 (PYLQILEQPK…EVQRKRQKLM (326 aa)) form the RHD domain. C59 carries the S-nitrosocysteine; alternate modification. A lipid anchor (S-(15-deoxy-Delta12,14-prostaglandin J2-9-yl)cysteine; alternate) is attached at C59. K323 is covalently cross-linked (Glycyl lysine isopeptide (Lys-Gly) (interchain with G-Cter in SUMO2)). Residue S335 is modified to Phosphoserine; by PKA. The Nuclear localization signal motif lies at 358 to 363 (QRKRQK). A GRR region spans residues 370 to 392 (DSFGGGSGAGAGGGGMFGSGGGG). An interaction with CFLAR region spans residues 433-971 (INTKFKNGPK…GQEGPIEGKI (539 aa)). Position 438 is an N6-acetyllysine; by EP300 (K438). Residues 439–470 (NGPKDCAKSDDEESLTLPEKETEGEGPSLPMA) form a disordered region. S447 is subject to Phosphoserine. ANK repeat units lie at residues 538–567 (NGDS…GLIS), 577–606 (LYQT…DLSL), 610–639 (WGNS…AAPL), 646–675 (EGLN…EVNA), 680–710 (SGRT…HVDS), and 714–743 (DGTT…DPLV). Residues 646-680 (EGLNAIHIAVMSNSLPCLLLLVAAGAEVNAQEQKS) form an essential for interaction with HIF1AN region. N674 carries the (3S)-3-hydroxyasparagine; by HIF1AN modification. S755 is modified (phosphoserine). An ANK 7 repeat occupies 767–797 (PGTTPLDMAANWQVFDILNGKPYEPVFTSDD). The Death domain occupies 801 to 888 (QGDMKQLTED…EAIEVIQAAF (88 aa)). S896 is modified (phosphoserine). S910 bears the Phosphoserine; by GSK3-beta; in vitro mark. The residue at position 926 (S926) is a Phosphoserine. S930 and S935 each carry phosphoserine; by IKKB. Phosphoserine is present on S940. A Phosphothreonine modification is found at T946.

In terms of assembly, component of the NF-kappa-B p65-p50 complex. Homodimer; component of the NF-kappa-B p50-p50 complex. Component of the NF-kappa-B p105-p50 complex. Component of the NF-kappa-B p50-c-Rel complex. Component of a complex consisting of the NF-kappa-B p50-p50 homodimer and BCL3. Also interacts with MAP3K8. NF-kappa-B p50 subunit interacts with NCOA3 coactivator, which may coactivate NF-kappa-B dependent expression via its histone acetyltransferase activity. Interacts with TSC22D3; this interaction prevents nuclear translocation and DNA-binding. Interacts with SPAG9 and UNC5CL. NFKB1/p105 interacts with CFLAR; the interaction inhibits p105 processing into p50. NFKB1/p105 forms a ternary complex with MAP3K8 and TNIP2. Interacts with GSK3B; the interaction prevents processing of p105 to p50. NFKB1/p50 interacts with NFKBIE. NFKB1/p50 interacts with NFKBIZ. Nuclear factor NF-kappa-B p50 subunit interacts with NFKBID. Directly interacts with MEN1. Interacts with HIF1AN. Interacts with FEM1AA; interaction is direct. Generation of the NF-kappa-B p50 (Nuclear factor NF-kappa-B p50 subunit) transcription factor takes place both cotranslationally and post-translationally via non-mutually exclusive mechanisms. A cotranslational processing allows the production of both p50 and p105 (Nuclear factor NF-kappa-B p105 subunit) from a single NFKB1 mRNA. While translation occurs, the particular unfolded structure after the GRR repeat region acts as a substrate for the proteasome, promoting degradation of the C-terminus. The GRR acts as a proteasomal 'stop signal', protecting the region upstream of the GRR from degradation and promoting generation of p50. It is unclear if limited proteasome degradation during cotranslational processing depends on ubiquitination. NF-kappa-B p50 is also generated post-translationally following ubiquitination by the KPC complex, leading to limited processing by the proteasome downstream of the GRR region, thereby generating p50. In terms of processing, phosphorylation at the C-terminus by IKBKB/IKKB acts as a signal for ubiquitination and promotes either complete degradation or processing to generate the NF-kappa-B p50 (Nuclear factor NF-kappa-B p50 subunit). Phosphorylation at Ser-910 primes p105 for proteolytic processing in response to TNF-alpha stimulation. Phosphorylation at Ser-926, Ser-930 and Ser-935 are required for BTRC/BTRCP-mediated ubiquitination and proteolysis. Phosphorylation at Ser-930 is also required for ubiquitination by the KPC complex and limited processing to generate NF-kappa-B p50 (Nuclear factor NF-kappa-B p50 subunit). Post-translationally, polyubiquitinated at multiple Lys residues in the C-terminus. Polyubiquitinated by the SCF(FBXW11) and SCF(BTRC) complexes following phosphorylation at Ser-926, Ser-930 and Ser-935, leading to its complete degradation. In contrast, polyubiquitination by the KPC complex following phosphorylation at Ser-930 leads to limited proteosomal processing and generation of the active NF-kappa-B p50 (Nuclear factor NF-kappa-B p50 subunit). S-nitrosylation of Cys-59 affects DNA binding. In terms of processing, the covalent modification of cysteine by 15-deoxy-Delta12,14-prostaglandin-J2 is autocatalytic and reversible. It may occur as an alternative to other cysteine modifications, such as S-nitrosylation and S-palmitoylation.

The protein resides in the cytoplasm. It is found in the nucleus. Its function is as follows. NF-kappa-B is a pleiotropic transcription factor present in almost all cell types and is the endpoint of a series of signal transduction events that are initiated by a vast array of stimuli related to many biological processes such as inflammation, immunity, differentiation, cell growth, tumorigenesis and apoptosis. NF-kappa-B is a homo- or heterodimeric complex formed by the Rel-like domain-containing proteins RELA/p65, RELB, NFKB1/p105, NFKB1/p50, REL and NFKB2/p52 and the heterodimeric p65-p50 complex appears to be most abundant one. The dimers bind at kappa-B sites in the DNA of their target genes and the individual dimers have distinct preferences for different kappa-B sites that they can bind with distinguishable affinity and specificity. Different dimer combinations act as transcriptional activators or repressors, respectively. NF-kappa-B is controlled by various mechanisms of post-translational modification and subcellular compartmentalization as well as by interactions with other cofactors or corepressors. NF-kappa-B complexes are held in the cytoplasm in an inactive state complexed with members of the NF-kappa-B inhibitor (I-kappa-B) family. In a conventional activation pathway, I-kappa-B is phosphorylated by I-kappa-B kinases (IKKs) in response to different activators, subsequently degraded thus liberating the active NF-kappa-B complex which translocates to the nucleus. NF-kappa-B heterodimeric p65-p50 and RelB-p50 complexes are transcriptional activators. The NF-kappa-B p50-p50 homodimer is a transcriptional repressor, but can act as a transcriptional activator when associated with BCL3. NFKB1 appears to have dual functions such as cytoplasmic retention of attached NF-kappa-B proteins by p105 and generation of p50 by a cotranslational processing. The proteasome-mediated process ensures the production of both p50 and p105 and preserves their independent function, although processing of NFKB1/p105 also appears to occur post-translationally. p50 binds to the kappa-B consensus sequence 5'-GGRNNYYCC-3', located in the enhancer region of genes involved in immune response and acute phase reactions. Plays a role in the regulation of apoptosis. In a complex with MAP3K8, NFKB1/p105 represses MAP3K8-induced MAPK signaling; active MAP3K8 is released by proteasome-dependent degradation of NFKB1/p105. In terms of biological role, P105 is the precursor of the active p50 subunit (Nuclear factor NF-kappa-B p50 subunit) of the nuclear factor NF-kappa-B. Acts as a cytoplasmic retention of attached NF-kappa-B proteins by p105. Constitutes the active form, which associates with RELA/p65 to form the NF-kappa-B p65-p50 complex to form a transcription factor. Together with RELA/p65, binds to the kappa-B consensus sequence 5'-GGRNNYYCC-3', located in the enhancer region of genes involved in immune response and acute phase reactions. Functionally, isoform 3 (p98) (but not p84 or p105) acts as a transactivator of NF-kappa-B-regulated gene expression. Its function is as follows. Acts as an inhibitor of transactivation of p50 NF-kappa-B subunit, probably by sequestering it in the cytoplasm. This is Nuclear factor NF-kappa-B p105 subunit (Nfkb1) from Mus musculus (Mouse).